A 91-amino-acid polypeptide reads, in one-letter code: Acyl-CoA-binding domain-containing protein 1 (91 aa).

One can recognise an ACB domain in the interval 3 to 88; it reads LQEDFEQYAE…VKQLLEEAAA (86 aa). Residues lysine 15, 30 to 34, lysine 56, and tyrosine 75 each bind an acyl-CoA; that span reads YGLYK.

This sequence belongs to the ACBP family. As to expression, highly expressed in leaves. Expressed at low levels in roots and seeds.

Its subcellular location is the cytoplasm. It is found in the cytosol. Functionally, binds medium- and long-chain acyl-CoA esters with high affinity. Can interact in vitro with palmitoyl-CoA, oleoyl-CoA, linoleoyl-CoA and linolenoyl-CoA. Binds phosphatidic acid (PA) and phosphatidylcholine (PC) in vitro. May play a role in the biosynthesis of phospholipids. The protein is Acyl-CoA-binding domain-containing protein 1 of Oryza sativa subsp. japonica (Rice).